Reading from the N-terminus, the 60-residue chain is Metallothionein B (60 aa).

Positions 1–28 (MDPCECSKSGTCNCGGSCTCTNCSCTSC) are beta. A divalent metal cation contacts are provided by Cys4, Cys6, Cys12, Cys14, Cys18, Cys20, Cys23, Cys25, Cys28, Cys32, Cys33, Cys35, Cys36, Cys40, Cys43, Cys47, Cys49, Cys54, Cys58, and Cys59. Residues 29-60 (KKSCCPCCPSGCTKCASGCVCKGKTCDTSCCQ) are alpha.

Belongs to the metallothionein superfamily. Type 1 family.

In terms of biological role, metallothioneins have a high content of cysteine residues that bind various heavy metals. This Trematomus bernacchii (Emerald rockcod) protein is Metallothionein B (mtb).